A 130-amino-acid chain; its full sequence is Classical arabinogalactan protein 7 (130 aa).

A signal peptide spans 1 to 21 (MNSKIIEAFFIVALFTTSCLA). A Pyrrolidone carboxylic acid modification is found at Gln22. The disordered stretch occupies residues 22–108 (QAPAPSPTTT…DASAPPPNAA (87 aa)). 5 positions are modified to 4-hydroxyproline: Pro24, Pro26, Pro28, Pro35, and Pro36. Pro24, Pro26, Pro28, Pro35, and Pro36 each carry an O-linked (Ara...) hydroxyproline glycan. Over residues 33 to 68 (TPPPVATPPPAATPAPTTTPPPAVSPAPTSSPPSSA) the composition is skewed to pro residues. Asn106 is lipidated: GPI-anchor amidated asparagine. Residues 107–130 (AALTNKAFVVGSLVAAIIYAVVLA) constitute a propeptide, removed in mature form.

The protein belongs to the classical AGP family. Post-translationally, O-glycosylated on hydroxyprolines; noncontiguous hydroxylproline residues are glycosylated with arabinogalactan.

The protein localises to the cell membrane. Proteoglycan that seems to be implicated in diverse developmental roles such as differentiation, cell-cell recognition, embryogenesis and programmed cell death. This is Classical arabinogalactan protein 7 (AGP7) from Arabidopsis thaliana (Mouse-ear cress).